A 466-amino-acid polypeptide reads, in one-letter code: Hepatocyte nuclear factor 3-alpha (466 aa).

A DNA-binding region (fork-head) is located at residues 169 to 260 (AKPPYSYISL…GNMFENGCYL (92 aa)). Positions 251–288 (GNMFENGCYLRRQKRFKCEKQPGAGGGSGGGGSKGVPE) are essential for DNA binding. The segment at 269–358 (EKQPGAGGGS…ASSSAPPISS (90 aa)) is disordered. Residues 273 to 284 (GAGGGSGGGGSK) are compositionally biased toward gly residues. A phosphoserine mark is found at serine 303 and serine 327. 2 stretches are compositionally biased toward low complexity: residues 318-328 (GAPAPGPAASP) and 344-358 (ELKS…PISS).

As to quaternary structure, binds DNA as a monomer. Interacts with FOXA2. Interacts with NKX2-1. Interacts with HDAC7. Interacts with the histone H3-H4 heterodimer. Associates with nucleosomes containing histone H2A. Interacts with AR. Interacts with NR0B2. In terms of tissue distribution, liver.

It is found in the nucleus. Functionally, transcription factor that is involved in embryonic development, establishment of tissue-specific gene expression and regulation of gene expression in differentiated tissues. Is thought to act as a 'pioneer' factor opening the compacted chromatin for other proteins through interactions with nucleosomal core histones and thereby replacing linker histones at target enhancer and/or promoter sites. Binds DNA with the consensus sequence 5'-[AC]A[AT]T[AG]TT[GT][AG][CT]T[CT]-3'. Proposed to play a role in translating the epigenetic signatures into cell type-specific enhancer-driven transcriptional programs. Involved in glucose homeostasis; activates the GCG promoter. Involved in the development of multiple endoderm-derived organ systems such as the liver, pancreas, lungs and prostate; FOXA1 and FOXA2 seem to have at least in part redundant roles. Modulates the transcriptional activity of nuclear hormone receptors. Is required for maximal gene activation mediated by AR in the prostate. Negatively regulates AR transactivation via competition with coactivators such as NCOA2. Is involved in ESR1-mediated transcription. Involved in regulation of apoptosis. Involved in cell cycle regulation. Originally described as a transcription activator for a number of liver genes such as AFP, albumin, tyrosine aminotransferase, PEPCK, etc. Interacts with the cis-acting regulatory regions of these genes. This chain is Hepatocyte nuclear factor 3-alpha (Foxa1), found in Rattus norvegicus (Rat).